The primary structure comprises 723 residues: Protein Aster-A (723 aa).

Over residues 1 to 18 (MFDTTPHSGRSSPSSSPS) the composition is skewed to low complexity. The disordered stretch occupies residues 1 to 63 (MFDTTPHSGR…SGVSGTLSTQ (63 aa)). Positions 28–38 (PSRPPSAPEPE) are enriched in pro residues. The 68-residue stretch at 93–160 (EDFRKLFSKL…KEVTCLKKEK (68 aa)) folds into the GRAM domain. The segment at 257-337 (SPSGAADRSQ…DGPTSNLGPL (81 aa)) is disordered. Ser-265, Ser-269, and Ser-273 each carry phosphoserine. Over residues 302–314 (DSQLDASSSQTVT) the composition is skewed to polar residues. The 172-residue stretch at 370–541 (SGRLLINSVF…ELAKAEKVSL (172 aa)) folds into the VASt domain. At Ser-418 the chain carries Phosphoserine. The tract at residues 562 to 601 (LSWRGHRDGPQHPDPDPCTQTSMHTSGSLSSRFSEPSVDQ) is disordered. The segment covering 566–576 (GHRDGPQHPDP) has biased composition (basic and acidic residues). A compositionally biased stretch (polar residues) spans 579–595 (CTQTSMHTSGSLSSRFS). The chain crosses the membrane as a helical span at residues 610–630 (ALVLISIVLIVLIALNALLFY).

It is found in the endoplasmic reticulum membrane. The protein resides in the cell membrane. The protein localises to the cytoplasmic vesicle. Its subcellular location is the autophagosome. Its function is as follows. Cholesterol transporter that mediates non-vesicular transport of cholesterol from the plasma membrane (PM) to the endoplasmic reticulum (ER). Contains unique domains for binding cholesterol and the PM, thereby serving as a molecular bridge for the transfer of cholesterol from the PM to the ER. Plays a crucial role in cholesterol homeostasis and has the unique ability to localize to the PM based on the level of membrane cholesterol. In lipid-poor conditions localizes to the ER membrane and in response to excess cholesterol in the PM is recruited to the endoplasmic reticulum-plasma membrane contact sites (EPCS) which is mediated by the GRAM domain. At the EPCS, the sterol-binding VASt/ASTER domain binds to the cholesterol in the PM and facilitates its transfer from the PM to ER. May play a role in tumor progression. Plays a role in autophagy regulation and is required for biogenesis of the autophagosome. This function in autophagy requires its cholesterol-transfer activity. The protein is Protein Aster-A of Rattus norvegicus (Rat).